The primary structure comprises 692 residues: ATP-dependent DNA helicase DinG (692 aa).

The 278-residue stretch at 16–293 (NLGNQLDNFI…AELAEYKKAA (278 aa)) folds into the Helicase ATP-binding domain. Residue 56–63 (AGTGIGKS) coordinates ATP. Position 123 (Cys123) interacts with [4Fe-4S] cluster. A DEAH box motif is present at residues 134–137 (NNDQ). [4Fe-4S] cluster contacts are provided by Cys192 and Cys202. The short motif at 247-250 (DEAH) is the DEAH box element. The Helicase C-terminal domain occupies 514 to 692 (LIKTLPEYLE…PPFKRVIEYS (179 aa)).

It belongs to the helicase family. DinG subfamily. Type 1 sub-subfamily. Requires [4Fe-4S] cluster as cofactor.

It catalyses the reaction Couples ATP hydrolysis with the unwinding of duplex DNA at the replication fork by translocating in the 5'-3' direction. This creates two antiparallel DNA single strands (ssDNA). The leading ssDNA polymer is the template for DNA polymerase III holoenzyme which synthesizes a continuous strand.. The enzyme catalyses ATP + H2O = ADP + phosphate + H(+). Its function is as follows. DNA-dependent ATPase and 5'-3' DNA helicase. Unwinds D-loops, R-loops, forked DNA and G-quadruplex DNA. This is ATP-dependent DNA helicase DinG from Photobacterium profundum (strain SS9).